The primary structure comprises 177 residues: ATP synthase subunit delta (177 aa).

This sequence belongs to the ATPase delta chain family. In terms of assembly, F-type ATPases have 2 components, F(1) - the catalytic core - and F(0) - the membrane proton channel. F(1) has five subunits: alpha(3), beta(3), gamma(1), delta(1), epsilon(1). F(0) has three main subunits: a(1), b(2) and c(10-14). The alpha and beta chains form an alternating ring which encloses part of the gamma chain. F(1) is attached to F(0) by a central stalk formed by the gamma and epsilon chains, while a peripheral stalk is formed by the delta and b chains.

Its subcellular location is the cell inner membrane. Its function is as follows. F(1)F(0) ATP synthase produces ATP from ADP in the presence of a proton or sodium gradient. F-type ATPases consist of two structural domains, F(1) containing the extramembraneous catalytic core and F(0) containing the membrane proton channel, linked together by a central stalk and a peripheral stalk. During catalysis, ATP synthesis in the catalytic domain of F(1) is coupled via a rotary mechanism of the central stalk subunits to proton translocation. Functionally, this protein is part of the stalk that links CF(0) to CF(1). It either transmits conformational changes from CF(0) to CF(1) or is implicated in proton conduction. This chain is ATP synthase subunit delta, found in Colwellia psychrerythraea (strain 34H / ATCC BAA-681) (Vibrio psychroerythus).